The sequence spans 214 residues: MGKRIGLFGGTFDPVHIGHMRSAVEMAEQFALDELRLLPNARPPHRDAPQVSAAQRLAMVERAVAGVERLTVDARELLRDKPSYTIDTLESVRAELAADDQLFMLIGWDAFCGLPTWHRWEALLEHCHIIVLQRPDADSEPPEALRDLLAARSVADPRALKGPGGQITFVWQTPLAVSATQIRALLGNGRSVRFLVPDAVLNYIEAHHLYRAPH.

This sequence belongs to the NadD family.

The enzyme catalyses nicotinate beta-D-ribonucleotide + ATP + H(+) = deamido-NAD(+) + diphosphate. Its pathway is cofactor biosynthesis; NAD(+) biosynthesis; deamido-NAD(+) from nicotinate D-ribonucleotide: step 1/1. In terms of biological role, catalyzes the reversible adenylation of nicotinate mononucleotide (NaMN) to nicotinic acid adenine dinucleotide (NaAD). This chain is Probable nicotinate-nucleotide adenylyltransferase, found in Pseudomonas paraeruginosa (strain DSM 24068 / PA7) (Pseudomonas aeruginosa (strain PA7)).